Reading from the N-terminus, the 312-residue chain is Transcription factor Ouib (312 aa).

The ZAD domain maps to 4–79 (IVCRVCGRQK…IKTQTKWLTI (76 aa)). 4 residues coordinate Zn(2+): cysteine 6, cysteine 9, cysteine 52, and cysteine 55. 5 consecutive C2H2-type zinc fingers follow at residues 167 to 189 (YICE…MRKH), 195 to 217 (FGCK…HRVH), 223 to 245 (FACR…ERTH), 251 to 273 (YVCE…MVIH), and 279 to 303 (FRCD…SMMH).

Expressed predominantly in the prothoracic gland during embryonic and larval development.

Its subcellular location is the nucleus. Transcription factor required for ecdysteroid production in the prothoracic gland by activating transcription of the ecdysteroid biosynthesis gene spok. Binds to the 5'-AGCTTTATTATTTAG-3' DNA sequence in the spok enhancer region. The polypeptide is Transcription factor Ouib (Drosophila melanogaster (Fruit fly)).